The sequence spans 658 residues: Aminopeptidase P1 (658 aa).

Residues arginine 69 and histidine 436 each contribute to the a peptide site. Mn(2+)-binding residues include aspartate 456, aspartate 467, and histidine 530. Residues histidine 530, histidine 539, and glutamate 563 each contribute to the a peptide site. 2 residues coordinate Mn(2+): glutamate 563 and glutamate 577.

It belongs to the peptidase M24B family. Homodimer. Interacts with N-1-naphthylphthalamic acid (NPA). Interacts with NBCL/BOP2/COCH around the plasma membrane and in the nucleus; this interaction disturbs its regulation of the nuclear transcription factor Y subunit (NF-YA1). The cofactor is Mn(2+). It depends on Zn(2+) as a cofactor. As to expression, expressed at similar levels in shoot apical meristems (SAM), root meristems (RM), root apical meristems (RAM), roots and leaves and, to a slightly lesser degree, in root nodules.

Its subcellular location is the nucleus. It localises to the cytoplasm. It is found in the cell membrane. The protein resides in the microsome membrane. It catalyses the reaction Release of any N-terminal amino acid, including proline, that is linked to proline, even from a dipeptide or tripeptide.. Its function is as follows. Catalyzes the removal of a penultimate prolyl residue from the N-termini of peptides, such as Arg-Pro-Pro. Aminopeptidase that binds to the auxin transport inhibitor N-1-naphthylphthalamic acid (NPA). May play a negative role in the regulation of PIN auxin transport proteins. Involved in the coordination of the symbiotic nodule developmental program; prevents the formation of root nodules by regulating the expression of the nuclear transcription factor Y subunit (NF-YA1), a key nodulin. In Lotus japonicus (Lotus corniculatus var. japonicus), this protein is Aminopeptidase P1.